The chain runs to 252 residues: Uracil-DNA glycosylase (252 aa).

The active-site Proton acceptor is Asp-78.

It belongs to the uracil-DNA glycosylase (UDG) superfamily. UNG family.

It is found in the cytoplasm. It catalyses the reaction Hydrolyzes single-stranded DNA or mismatched double-stranded DNA and polynucleotides, releasing free uracil.. Excises uracil residues from the DNA which can arise as a result of misincorporation of dUMP residues by DNA polymerase or due to deamination of cytosine. In Bordetella avium (strain 197N), this protein is Uracil-DNA glycosylase.